The chain runs to 510 residues: 2,3-bisphosphoglycerate-independent phosphoglycerate mutase (510 aa).

Residues aspartate 12 and serine 62 each coordinate Mn(2+). Residue serine 62 is the Phosphoserine intermediate of the active site. Substrate contacts are provided by residues histidine 123, 153 to 154 (RD), arginine 185, arginine 191, 260 to 263 (RPDR), and lysine 335. The Mn(2+) site is built by aspartate 402, histidine 406, aspartate 443, histidine 444, and histidine 461.

It belongs to the BPG-independent phosphoglycerate mutase family. In terms of assembly, monomer. Mn(2+) serves as cofactor.

It catalyses the reaction (2R)-2-phosphoglycerate = (2R)-3-phosphoglycerate. It participates in carbohydrate degradation; glycolysis; pyruvate from D-glyceraldehyde 3-phosphate: step 3/5. Catalyzes the interconversion of 2-phosphoglycerate and 3-phosphoglycerate. The polypeptide is 2,3-bisphosphoglycerate-independent phosphoglycerate mutase (Listeria welshimeri serovar 6b (strain ATCC 35897 / DSM 20650 / CCUG 15529 / CIP 8149 / NCTC 11857 / SLCC 5334 / V8)).